The primary structure comprises 198 residues: Probable chemoreceptor glutamine deamidase CheD (198 aa).

The protein belongs to the CheD family.

It catalyses the reaction L-glutaminyl-[protein] + H2O = L-glutamyl-[protein] + NH4(+). Functionally, probably deamidates glutamine residues to glutamate on methyl-accepting chemotaxis receptors (MCPs), playing an important role in chemotaxis. This chain is Probable chemoreceptor glutamine deamidase CheD, found in Xanthomonas axonopodis pv. citri (strain 306).